Reading from the N-terminus, the 66-residue chain is Large ribosomal subunit protein bL35 (66 aa).

Belongs to the bacterial ribosomal protein bL35 family.

The protein is Large ribosomal subunit protein bL35 of Treponema denticola (strain ATCC 35405 / DSM 14222 / CIP 103919 / JCM 8153 / KCTC 15104).